The chain runs to 705 residues: DNA ligase (705 aa).

Residues 42–46 (DADFD), 91–92 (SL), and E125 contribute to the NAD(+) site. Catalysis depends on K127, which acts as the N6-AMP-lysine intermediate. Residues R148, E183, K299, and K323 each coordinate NAD(+). C428, C431, C446, and C452 together coordinate Zn(2+). A BRCT domain is found at 626–705 (TDGSPVAGKT…DGWLALIEGL (80 aa)).

It belongs to the NAD-dependent DNA ligase family. LigA subfamily. Requires Mg(2+) as cofactor. Mn(2+) is required as a cofactor.

The enzyme catalyses NAD(+) + (deoxyribonucleotide)n-3'-hydroxyl + 5'-phospho-(deoxyribonucleotide)m = (deoxyribonucleotide)n+m + AMP + beta-nicotinamide D-nucleotide.. DNA ligase that catalyzes the formation of phosphodiester linkages between 5'-phosphoryl and 3'-hydroxyl groups in double-stranded DNA using NAD as a coenzyme and as the energy source for the reaction. It is essential for DNA replication and repair of damaged DNA. The chain is DNA ligase from Roseobacter denitrificans (strain ATCC 33942 / OCh 114) (Erythrobacter sp. (strain OCh 114)).